The following is a 359-amino-acid chain: DNA replication and repair protein RecF (359 aa).

ATP is bound at residue 30–37 (GPNGSGKT).

This sequence belongs to the RecF family.

The protein resides in the cytoplasm. The RecF protein is involved in DNA metabolism; it is required for DNA replication and normal SOS inducibility. RecF binds preferentially to single-stranded, linear DNA. It also seems to bind ATP. The protein is DNA replication and repair protein RecF of Vibrio parahaemolyticus serotype O3:K6 (strain RIMD 2210633).